The primary structure comprises 369 residues: Phosphoribosylformylglycinamidine cyclo-ligase (369 aa).

The segment at Met1–Gly22 is disordered.

This sequence belongs to the AIR synthase family.

It localises to the cytoplasm. The enzyme catalyses 2-formamido-N(1)-(5-O-phospho-beta-D-ribosyl)acetamidine + ATP = 5-amino-1-(5-phospho-beta-D-ribosyl)imidazole + ADP + phosphate + H(+). The protein operates within purine metabolism; IMP biosynthesis via de novo pathway; 5-amino-1-(5-phospho-D-ribosyl)imidazole from N(2)-formyl-N(1)-(5-phospho-D-ribosyl)glycinamide: step 2/2. The sequence is that of Phosphoribosylformylglycinamidine cyclo-ligase from Mesorhizobium japonicum (strain LMG 29417 / CECT 9101 / MAFF 303099) (Mesorhizobium loti (strain MAFF 303099)).